A 735-amino-acid polypeptide reads, in one-letter code: Glycogen [starch] synthase, muscle (735 aa).

Residue serine 8 is modified to Phosphoserine; by AMPK and PKA. At serine 11 the chain carries Phosphoserine. Lysine 39 contacts UDP. Residues histidine 205 and arginine 211 each coordinate UDP-alpha-D-glucose. Residues histidine 291, glutamate 292, glutamine 294, histidine 297, and lysine 301 each coordinate alpha-D-glucose 6-phosphate. Arginine 331 serves as a coordination point for UDP. Arginine 331 serves as a coordination point for UDP-alpha-D-glucose. Phosphoserine is present on serine 412. Histidine 501 lines the alpha-D-glucose 6-phosphate pocket. Glutamate 510, tryptophan 512, and glycine 513 together coordinate UDP-alpha-D-glucose. Residue threonine 515 participates in UDP binding. Residues arginine 582 and arginine 586 each coordinate alpha-D-glucose 6-phosphate. Residues 629–735 are disordered; sequence DATQGYRYPR…PASSLGEERN (107 aa). Residue serine 641 is modified to Phosphoserine; by DYRK2, GSK3-alpha, GSK3-beta and PASK. Phosphoserine; by GSK3-alpha and GSK3-beta occurs at positions 645 and 649. At serine 652 the chain carries Phosphoserine. Serine 653 carries the post-translational modification Phosphoserine; by GSK3-alpha and GSK3-beta. At serine 657 the chain carries Phosphoserine; by CK2. Residues 658 to 681 are compositionally biased toward acidic residues; sequence EDEEEPRDGLPEEDGERYDEDEEA. Residues 682–695 show a composition bias toward basic and acidic residues; sequence AKDRRNIRAPEWPR. Serine 698 bears the Phosphoserine mark. A compositionally biased stretch (low complexity) spans 698-735; the sequence is SCTSSSGGSKRSNSVDTSSLSTPSEPLSPASSLGEERN. The residue at position 700 (threonine 700) is a Phosphothreonine. Phosphoserine occurs at positions 709 and 711. Position 719 is a phosphothreonine (threonine 719). A phosphoserine mark is found at serine 725 and serine 729.

The protein belongs to the glycosyltransferase 3 family. In terms of assembly, part of the GYS1-GYG1 complex, a heterooctamer composed of a tetramer of GYS1 and 2 dimers of GYG1, where each GYS1 protomer binds to one GYG1 subunit (via GYG1 C-terminus); the GYS1 tetramer may dissociate from GYG1 dimers to continue glycogen polymerization on its own. In terms of processing, phosphorylation at Ser-8 is required for modification of Ser-11 by casein kinase I. Post-translationally, phosphorylated at Ser-641 by PASK, leading to inactivation; phosphorylation by PASK is inhibited by glycogen. Dephosphorylation at Ser-641 and Ser-645 by PP1 activates the enzyme. Phosphorylation at Ser-8 by AMPK inactivates the enzyme activity. Phosphorylated at Ser-641 by DYRK2, leading to inactivation. Primed phosphorylation at Ser-657 (site 5) by CSNK2A1 and CSNK2A2 is required for inhibitory phosphorylation at Ser-641 (site 3a), Ser-645 (site 3b), Ser-649 (site 3c) and Ser-653 (site 4) by GSK3A and GSK3B.

The enzyme catalyses [(1-&gt;4)-alpha-D-glucosyl](n) + UDP-alpha-D-glucose = [(1-&gt;4)-alpha-D-glucosyl](n+1) + UDP + H(+). It functions in the pathway glycan biosynthesis; glycogen biosynthesis. Allosteric activation by glucose-6-phosphate. Phosphorylation reduces the activity towards UDP-glucose. When in the non-phosphorylated state, glycogen synthase does not require glucose-6-phosphate as an allosteric activator; when phosphorylated it does. Glycogen synthase participates in the glycogen biosynthetic process along with glycogenin and glycogen branching enzyme. Extends the primer composed of a few glucose units formed by glycogenin by adding new glucose units to it. In this context, glycogen synthase transfers the glycosyl residue from UDP-Glc to the non-reducing end of alpha-1,4-glucan. The sequence is that of Glycogen [starch] synthase, muscle from Oryctolagus cuniculus (Rabbit).